The chain runs to 192 residues: Peptidyl-tRNA hydrolase (192 aa).

Histidine 19 acts as the Proton acceptor in catalysis. Residues tyrosine 64, asparagine 66, and asparagine 112 each coordinate tRNA.

This sequence belongs to the PTH family. As to quaternary structure, monomer.

It is found in the cytoplasm. The enzyme catalyses an N-acyl-L-alpha-aminoacyl-tRNA + H2O = an N-acyl-L-amino acid + a tRNA + H(+). Its function is as follows. Hydrolyzes ribosome-free peptidyl-tRNAs (with 1 or more amino acids incorporated), which drop off the ribosome during protein synthesis, or as a result of ribosome stalling. Functionally, catalyzes the release of premature peptidyl moieties from peptidyl-tRNA molecules trapped in stalled 50S ribosomal subunits, and thus maintains levels of free tRNAs and 50S ribosomes. This chain is Peptidyl-tRNA hydrolase, found in Acidiphilium cryptum (strain JF-5).